The sequence spans 123 residues: Large ribosomal subunit protein bL12 (123 aa).

The segment at 96–123 (NVKEGVSKEEAEGLKKSLEEAGATVELK) is disordered. Residues 100-114 (GVSKEEAEGLKKSLE) are compositionally biased toward basic and acidic residues.

The protein belongs to the bacterial ribosomal protein bL12 family. Homodimer. Part of the ribosomal stalk of the 50S ribosomal subunit. Forms a multimeric L10(L12)X complex, where L10 forms an elongated spine to which 2 to 4 L12 dimers bind in a sequential fashion. Binds GTP-bound translation factors.

Its function is as follows. Forms part of the ribosomal stalk which helps the ribosome interact with GTP-bound translation factors. Is thus essential for accurate translation. This chain is Large ribosomal subunit protein bL12, found in Flavobacterium johnsoniae (strain ATCC 17061 / DSM 2064 / JCM 8514 / BCRC 14874 / CCUG 350202 / NBRC 14942 / NCIMB 11054 / UW101) (Cytophaga johnsonae).